The sequence spans 208 residues: Sodium/potassium-transporting ATPase subunit beta-1-interacting protein 2 (208 aa).

4 helical membrane-spanning segments follow: residues 1–23, 35–55, 62–82, and 153–173; these read MGYC…CVLE, APIL…FGTI, ITGY…VICF, and LQIV…KCIT.

It belongs to the NKAIN family. In terms of assembly, interacts with ATP1B1. In terms of tissue distribution, expressed in fetal brain. Weakly expressed in adult brain and thymus. Not expressed in any other normal tissue examined.

Its subcellular location is the cell membrane. This Homo sapiens (Human) protein is Sodium/potassium-transporting ATPase subunit beta-1-interacting protein 2 (NKAIN2).